The chain runs to 337 residues: Anthranilate phosphoribosyltransferase (337 aa).

Residues Gly81, 84-85 (GD), Ser89, 91-94 (NVST), 109-117 (KHGNRALSS), and Ala121 contribute to the 5-phospho-alpha-D-ribose 1-diphosphate site. Position 81 (Gly81) interacts with anthranilate. Ser93 is a Mg(2+) binding site. Asn112 is an anthranilate binding site. Anthranilate is bound at residue Arg167. Asp226 and Glu227 together coordinate Mg(2+).

Belongs to the anthranilate phosphoribosyltransferase family. Homodimer. It depends on Mg(2+) as a cofactor.

The catalysed reaction is N-(5-phospho-beta-D-ribosyl)anthranilate + diphosphate = 5-phospho-alpha-D-ribose 1-diphosphate + anthranilate. It functions in the pathway amino-acid biosynthesis; L-tryptophan biosynthesis; L-tryptophan from chorismate: step 2/5. Catalyzes the transfer of the phosphoribosyl group of 5-phosphorylribose-1-pyrophosphate (PRPP) to anthranilate to yield N-(5'-phosphoribosyl)-anthranilate (PRA). The protein is Anthranilate phosphoribosyltransferase of Bradyrhizobium sp. (strain ORS 278).